A 552-amino-acid chain; its full sequence is uncharacterized protein (552 aa).

Residue 29–36 (GENAWGKS) participates in ATP binding. The region spanning 379 to 469 (RCWLLVEGET…AEREHLTALP (91 aa)) is the Toprim domain.

This is an uncharacterized protein from Escherichia coli (strain K12).